Consider the following 63-residue polypeptide: Cecropin-2 (63 aa).

A signal peptide spans 1 to 23 (MNFYKVFIFVALILAISLGQSEA). R62 carries the arginine amide modification.

The protein belongs to the cecropin family.

The protein resides in the secreted. In terms of biological role, cecropins have lytic and antibacterial activity against several Gram-positive and Gram-negative bacteria. This is Cecropin-2 (Cec2A) from Drosophila virilis (Fruit fly).